The following is a 378-amino-acid chain: 4-hydroxy-3-methylbut-2-en-1-yl diphosphate synthase (flavodoxin) (378 aa).

[4Fe-4S] cluster contacts are provided by cysteine 268, cysteine 271, cysteine 303, and glutamate 310.

Belongs to the IspG family. [4Fe-4S] cluster is required as a cofactor.

It catalyses the reaction (2E)-4-hydroxy-3-methylbut-2-enyl diphosphate + oxidized [flavodoxin] + H2O + 2 H(+) = 2-C-methyl-D-erythritol 2,4-cyclic diphosphate + reduced [flavodoxin]. Its pathway is isoprenoid biosynthesis; isopentenyl diphosphate biosynthesis via DXP pathway; isopentenyl diphosphate from 1-deoxy-D-xylulose 5-phosphate: step 5/6. Its function is as follows. Converts 2C-methyl-D-erythritol 2,4-cyclodiphosphate (ME-2,4cPP) into 1-hydroxy-2-methyl-2-(E)-butenyl 4-diphosphate. This Corynebacterium glutamicum (strain ATCC 13032 / DSM 20300 / JCM 1318 / BCRC 11384 / CCUG 27702 / LMG 3730 / NBRC 12168 / NCIMB 10025 / NRRL B-2784 / 534) protein is 4-hydroxy-3-methylbut-2-en-1-yl diphosphate synthase (flavodoxin).